A 115-amino-acid polypeptide reads, in one-letter code: Large ribosomal subunit protein bL19 (115 aa).

The protein belongs to the bacterial ribosomal protein bL19 family.

Functionally, this protein is located at the 30S-50S ribosomal subunit interface and may play a role in the structure and function of the aminoacyl-tRNA binding site. The polypeptide is Large ribosomal subunit protein bL19 (Streptococcus mutans serotype c (strain ATCC 700610 / UA159)).